The following is a 145-amino-acid chain: D-aminoacyl-tRNA deacylase (145 aa).

Residues 137 to 138 (GP) carry the Gly-cisPro motif, important for rejection of L-amino acids motif.

Belongs to the DTD family. Homodimer.

It localises to the cytoplasm. It carries out the reaction glycyl-tRNA(Ala) + H2O = tRNA(Ala) + glycine + H(+). The enzyme catalyses a D-aminoacyl-tRNA + H2O = a tRNA + a D-alpha-amino acid + H(+). In terms of biological role, an aminoacyl-tRNA editing enzyme that deacylates mischarged D-aminoacyl-tRNAs. Also deacylates mischarged glycyl-tRNA(Ala), protecting cells against glycine mischarging by AlaRS. Acts via tRNA-based rather than protein-based catalysis; rejects L-amino acids rather than detecting D-amino acids in the active site. By recycling D-aminoacyl-tRNA to D-amino acids and free tRNA molecules, this enzyme counteracts the toxicity associated with the formation of D-aminoacyl-tRNA entities in vivo and helps enforce protein L-homochirality. The protein is D-aminoacyl-tRNA deacylase of Alcanivorax borkumensis (strain ATCC 700651 / DSM 11573 / NCIMB 13689 / SK2).